Here is a 601-residue protein sequence, read N- to C-terminus: ATP-dependent RNA helicase DeaD (601 aa).

Residues Ser-6 to Ala-34 carry the Q motif motif. The Helicase ATP-binding domain occupies Ile-37 to Ile-208. Ala-50 to Thr-57 provides a ligand contact to ATP. Positions Asp-156–Asp-159 match the DEAD box motif. Residues Lys-231–Leu-378 enclose the Helicase C-terminal domain. Basic and acidic residues predominate over residues Ser-552–Ser-576. The segment at Ser-552–Val-601 is disordered.

It belongs to the DEAD box helicase family. DeaD/CsdA subfamily.

Its subcellular location is the cytoplasm. It carries out the reaction ATP + H2O = ADP + phosphate + H(+). In terms of biological role, DEAD-box RNA helicase involved in various cellular processes at low temperature, including ribosome biogenesis, mRNA degradation and translation initiation. The sequence is that of ATP-dependent RNA helicase DeaD from Buchnera aphidicola subsp. Acyrthosiphon pisum (strain APS) (Acyrthosiphon pisum symbiotic bacterium).